The following is a 511-amino-acid chain: Histidine ammonia-lyase (511 aa).

The segment at residues 144–146 (ASG) is a cross-link (5-imidazolinone (Ala-Gly)). The residue at position 145 (S145) is a 2,3-didehydroalanine (Ser).

Belongs to the PAL/histidase family. Contains an active site 4-methylidene-imidazol-5-one (MIO), which is formed autocatalytically by cyclization and dehydration of residues Ala-Ser-Gly.

The protein localises to the cytoplasm. It carries out the reaction L-histidine = trans-urocanate + NH4(+). The protein operates within amino-acid degradation; L-histidine degradation into L-glutamate; N-formimidoyl-L-glutamate from L-histidine: step 1/3. The polypeptide is Histidine ammonia-lyase (Halalkalibacterium halodurans (strain ATCC BAA-125 / DSM 18197 / FERM 7344 / JCM 9153 / C-125) (Bacillus halodurans)).